The sequence spans 462 residues: L-seryl-tRNA(Sec) selenium transferase (462 aa).

Lysine 294 carries the N6-(pyridoxal phosphate)lysine modification.

It belongs to the SelA family. In terms of assembly, homodecamer; pentamer of dimers. Binds only one seryl-tRNA(Sec) per dimer. Requires pyridoxal 5'-phosphate as cofactor.

The protein localises to the cytoplasm. The catalysed reaction is L-seryl-tRNA(Sec) + selenophosphate + H(+) = L-selenocysteinyl-tRNA(Sec) + phosphate. The protein operates within aminoacyl-tRNA biosynthesis; selenocysteinyl-tRNA(Sec) biosynthesis; selenocysteinyl-tRNA(Sec) from L-seryl-tRNA(Sec) (bacterial route): step 1/1. In terms of biological role, converts seryl-tRNA(Sec) to selenocysteinyl-tRNA(Sec) required for selenoprotein biosynthesis. The polypeptide is L-seryl-tRNA(Sec) selenium transferase (Yersinia pseudotuberculosis serotype O:1b (strain IP 31758)).